Reading from the N-terminus, the 96-residue chain is ESAT-6-like protein SAG0230 (96 aa).

Belongs to the WXG100 family. sagEsxA-like subfamily. Homodimer.

The polypeptide is ESAT-6-like protein SAG0230 (Streptococcus agalactiae serotype V (strain ATCC BAA-611 / 2603 V/R)).